Reading from the N-terminus, the 348-residue chain is Nuclear receptor subfamily 1 group I member 3 (348 aa).

A DNA-binding region (nuclear receptor) is located at residues 8–83 (PRSCMVCGDR…AGMKKEMILS (76 aa)). The segment at 11 to 31 (CMVCGDRATGYHFHALTCEGC) adopts an NR C4-type zinc-finger fold. The residue at position 38 (threonine 38) is a Phosphothreonine; by PKC. The segment at 47–71 (CPFAGSCKVNKAQRRHCPACRLQKC) adopts an NR C4-type zinc-finger fold. One can recognise an NR LBD domain in the interval 109–348 (GQQELVQTLL…MMPLLQEICS (240 aa)).

Belongs to the nuclear hormone receptor family. NR1 subfamily. As to quaternary structure, heterodimer of NR1I3 and RXR. Interacts with PSMC4. Interacts with ECT2. Directly interacts with DNAJC7; this complex may also include HSP90. Interacts with CRY1. Interacts with CRY2 in a ligand-dependent manner. In terms of processing, phosphorylated at Thr-38 by PKC, dephosphorylation of Thr-38 is required for nuclear translocation and activation.

It localises to the nucleus. Its subcellular location is the cytoplasm. The protein localises to the cytoskeleton. Its function is as follows. Binds and transactivates the retinoic acid response elements that control expression of the retinoic acid receptor beta 2 and alcohol dehydrogenase 3 genes. Transactivates both the phenobarbital responsive element module of the human CYP2B6 gene and the CYP3A4 xenobiotic response element. The protein is Nuclear receptor subfamily 1 group I member 3 (NR1I3) of Pusa sibirica (Baikal seal).